A 469-amino-acid chain; its full sequence is Glutamate--tRNA ligase (469 aa).

The short motif at 9-19 is the 'HIGH' region element; sequence PSPTGFLHVGG. The 'KMSKS' region motif lies at 236–240; the sequence is KLSKR. K239 serves as a coordination point for ATP.

It belongs to the class-I aminoacyl-tRNA synthetase family. Glutamate--tRNA ligase type 1 subfamily. Monomer.

It localises to the cytoplasm. The enzyme catalyses tRNA(Glu) + L-glutamate + ATP = L-glutamyl-tRNA(Glu) + AMP + diphosphate. Its function is as follows. Catalyzes the attachment of glutamate to tRNA(Glu) in a two-step reaction: glutamate is first activated by ATP to form Glu-AMP and then transferred to the acceptor end of tRNA(Glu). This chain is Glutamate--tRNA ligase, found in Shewanella frigidimarina (strain NCIMB 400).